The chain runs to 149 residues: uncharacterized protein (149 aa).

The region spanning 16 to 128 (PAGEPAIRVI…LFTFVAIDED (113 aa)) is the HotDog ACOT-type domain.

This sequence belongs to the acyl coenzyme A hydrolase family.

This is an uncharacterized protein from Zymomonas mobilis subsp. mobilis (strain ATCC 31821 / ZM4 / CP4).